The sequence spans 502 residues: Glutamate decarboxylase (502 aa).

Lysine 278 carries the post-translational modification N6-(pyridoxal phosphate)lysine. The tract at residues 471 to 502 (GLHHFHMDTVETQKDIIKHWRKIAGKKTSGVC) is calmodulin-binding.

Belongs to the group II decarboxylase family. Pyridoxal 5'-phosphate serves as cofactor.

It carries out the reaction L-glutamate + H(+) = 4-aminobutanoate + CO2. Catalyzes the production of GABA. The calmodulin-binding is calcium-dependent and it is proposed that this may, directly or indirectly, form a calcium regulated control of GABA biosynthesis. The sequence is that of Glutamate decarboxylase from Solanum lycopersicum (Tomato).